The primary structure comprises 491 residues: V-type proton ATPase subunit B 1 (491 aa).

Arginine 380 contributes to the ATP binding site.

This sequence belongs to the ATPase alpha/beta chains family. In terms of assembly, V-ATPase is a heteromultimeric enzyme made up of two complexes: the ATP-hydrolytic V1 complex and the proton translocation V0 complex. The V1 complex consists of three catalytic AB heterodimers that form a heterohexamer, three peripheral stalks each consisting of EG heterodimers, one central rotor including subunits D and F, and the regulatory subunits C and H. The proton translocation complex V0 consists of the proton transport subunit a, a ring of proteolipid subunits c9c'', rotary subunit d, subunits e and f, and the accessory subunits vah-19/Ac45 and vah-20/PRR. In terms of tissue distribution, expressed ubiquitously. Highly expressed in the H-shaped excretory cell, the excretory pore, the intestine, and hypodermal cells. Expressed in the nervous system. Expressed at low levels in muscles.

In terms of biological role, non-catalytic subunit of the V1 complex of vacuolar(H+)-ATPase (V-ATPase), a multisubunit enzyme composed of a peripheral complex (V1) that hydrolyzes ATP and a membrane integral complex (V0) that translocates protons. V-ATPase is responsible for acidifying and maintaining the pH of intracellular compartments and in some cell types, is targeted to the plasma membrane, where it is responsible for acidifying the extracellular environment. Essential for the proper assembly and activity of V-ATPase. Required maternally for early embryogenesis and zygotically during morphogenesis. Specifically, involved in the clearance of apoptotic cell corpses in embryos. Also, during embryonic development, the V-ATPase is required to repress fusion of epidermal cells probably by negatively regulating eff-1-mediated cell fusion. In neurons, required for necrotic cell death by promoting intracellular acidification. Required for cell death induced by hypoxia. Required for acidification of synaptic vesicles and the release of neurotransmitters from adult neurons. This Caenorhabditis elegans protein is V-type proton ATPase subunit B 1.